A 94-amino-acid chain; its full sequence is UPF0381 protein YfcZ (94 aa).

Belongs to the UPF0381 family.

The protein is UPF0381 protein YfcZ (yfcZ) of Escherichia coli O6:H1 (strain CFT073 / ATCC 700928 / UPEC).